The sequence spans 162 residues: Transcription antitermination protein RfaH (162 aa).

It belongs to the RfaH family. In terms of assembly, interacts with both the nontemplate DNA and the RNA polymerase (RNAP). Monomer in solution.

Its function is as follows. Enhances distal genes transcription elongation in a specialized subset of operons that encode extracytoplasmic components. RfaH is recruited into a multi-component RNA polymerase complex by the ops element, which is a short conserved DNA sequence located downstream of the main promoter of these operons. Once bound, RfaH suppresses pausing and inhibits Rho-dependent and intrinsic termination at a subset of sites. Termination signals are bypassed, which allows complete synthesis of long RNA chains. Enhances expression of several operons involved in synthesis of lipopolysaccharides, exopolysaccharides, hemolysin, and sex factor. Also negatively controls expression and surface presentation of AG43 and possibly another AG43-independent factor that mediates cell-cell interactions and biofilm formation. The sequence is that of Transcription antitermination protein RfaH from Escherichia coli (strain K12).